We begin with the raw amino-acid sequence, 102 residues long: Thioredoxin (102 aa).

Positions 1-102 (MVQVVSQENF…SLIKLISKHQ (102 aa)) constitute a Thioredoxin domain. A disulfide bond links cysteine 28 and cysteine 31.

It belongs to the thioredoxin family.

In terms of biological role, participates in various redox reactions through the reversible oxidation of its active center dithiol to a disulfide and catalyzes dithiol-disulfide exchange reactions. The chain is Thioredoxin (trxA) from Chlamydia trachomatis serovar D (strain ATCC VR-885 / DSM 19411 / UW-3/Cx).